We begin with the raw amino-acid sequence, 240 residues long: Cysteine-rich venom protein (240 aa).

Residues 1-19 form the signal peptide; that stretch reads MIAFIVLPILAAVLQQSSG. One can recognise an SCP domain in the interval 39 to 166; it reads DLHNSLRRSV…EYSYFYVCQY (128 aa). Intrachain disulfides connect cysteine 75–cysteine 153, cysteine 92–cysteine 167, cysteine 148–cysteine 164, cysteine 186–cysteine 193, cysteine 189–cysteine 198, cysteine 202–cysteine 235, cysteine 211–cysteine 229, and cysteine 220–cysteine 233. The 34-residue stretch at 202 to 235 folds into the ShKT domain; sequence CRQENKFTNCDSLVRQSSCQDNYMKTNCPASCFC.

It belongs to the CRISP family. In terms of tissue distribution, expressed by the venom gland.

It is found in the secreted. Its function is as follows. Blocks contraction of smooth muscle elicited by high potassium-induced depolarization, but does not block caffeine-stimulated contraction. May target voltage-gated calcium channels on smooth muscle. This Protobothrops jerdonii (Jerdon's pitviper) protein is Cysteine-rich venom protein.